We begin with the raw amino-acid sequence, 374 residues long: MKFLTALSAIGALVATATAAAVPNTPAKQSMIDVQLSATGNTMIKATITNKGDKALNLLQFNTILDKNPTRKVRVYQNGTEVKFTGMLPRYKMSNLSPEYFTSLGPKASVESTFDIARTHDLTRGGKITVMASGTIRTAEGHGANATTITGYARYESNKLELDVDAKKASSVGQAMGKVKKSRGTIDKRTNIDTSSCTQGQLDALEGALYNSAALAQAAAEAAPSNLNTVAEFFKSTSSSTVNTIVSRLQSVASESSYVDYGSTTYYCTDSMNGCSPGVLAYTLPDQNLIFNCPIYYSDLPALAQSCYEQDQATTTLHEMTHNSAVVSPFCDDLGYGYEDATSLSAAQAIQNADSYALFANGKLILHLHEKSGF.

The first 19 residues, 1-19, serve as a signal peptide directing secretion; sequence MKFLTALSAIGALVATATA. Residues 20–189 constitute a propeptide that is removed on maturation; that stretch reads AAVPNTPAKQ…KKSRGTIDKR (170 aa). 2 cysteine pairs are disulfide-bonded: Cys197–Cys268 and Cys275–Cys293. His318 provides a ligand contact to Zn(2+). Glu319 is a catalytic residue. 2 residues coordinate Zn(2+): His322 and Asp333.

The protein belongs to the peptidase M35 family. Requires Zn(2+) as cofactor.

Its subcellular location is the secreted. The enzyme catalyses Preferential cleavage of bonds with hydrophobic residues in P1'. Also 3-Asn-|-Gln-4 and 8-Gly-|-Ser-9 bonds in insulin B chain.. Its function is as follows. Probable secreted metalloprotease that shows high activities on basic nuclear substrates such as histone and protamine. May be involved in virulence. The protein is Probable neutral protease 2 homolog ARB_00849 of Arthroderma benhamiae (strain ATCC MYA-4681 / CBS 112371) (Trichophyton mentagrophytes).